The primary structure comprises 151 residues: Arginine repressor (151 aa).

This sequence belongs to the ArgR family.

The protein localises to the cytoplasm. It participates in amino-acid biosynthesis; L-arginine biosynthesis [regulation]. In terms of biological role, regulates arginine biosynthesis genes. The chain is Arginine repressor from Haemophilus influenzae (strain PittGG).